A 102-amino-acid polypeptide reads, in one-letter code: Large ribosomal subunit protein uL24 (102 aa).

This sequence belongs to the universal ribosomal protein uL24 family. As to quaternary structure, part of the 50S ribosomal subunit.

Its function is as follows. One of two assembly initiator proteins, it binds directly to the 5'-end of the 23S rRNA, where it nucleates assembly of the 50S subunit. One of the proteins that surrounds the polypeptide exit tunnel on the outside of the subunit. The protein is Large ribosomal subunit protein uL24 of Rhizobium rhizogenes (strain K84 / ATCC BAA-868) (Agrobacterium radiobacter).